Here is a 212-residue protein sequence, read N- to C-terminus: Vesicle transport protein SFT2C (212 aa).

At M1–G78 the chain is on the cytoplasmic side. A helical membrane pass occupies residues L79 to L99. The Lumenal segment spans residues L100–K104. Residues F105–G125 form a helical membrane-spanning segment. Over G126–S142 the chain is Cytoplasmic. Residues T143–L165 form a helical membrane-spanning segment. The Lumenal portion of the chain corresponds to T166–V174. A helical membrane pass occupies residues A175–L197. The Cytoplasmic segment spans residues G198–V212.

Belongs to the SFT2 family.

It is found in the membrane. Its function is as follows. May be involved in fusion of retrograde transport vesicles derived from an endocytic compartment with the Golgi complex. In Mus musculus (Mouse), this protein is Vesicle transport protein SFT2C.